Here is a 267-residue protein sequence, read N- to C-terminus: Tryptophan synthase alpha chain (267 aa).

Active-site proton acceptor residues include E47 and D58.

The protein belongs to the TrpA family. As to quaternary structure, tetramer of two alpha and two beta chains.

It catalyses the reaction (1S,2R)-1-C-(indol-3-yl)glycerol 3-phosphate + L-serine = D-glyceraldehyde 3-phosphate + L-tryptophan + H2O. It participates in amino-acid biosynthesis; L-tryptophan biosynthesis; L-tryptophan from chorismate: step 5/5. Its function is as follows. The alpha subunit is responsible for the aldol cleavage of indoleglycerol phosphate to indole and glyceraldehyde 3-phosphate. The polypeptide is Tryptophan synthase alpha chain (Chlorobium phaeovibrioides (strain DSM 265 / 1930) (Prosthecochloris vibrioformis (strain DSM 265))).